Consider the following 716-residue polypeptide: DNA ligase (716 aa).

NAD(+) is bound by residues D49–D53, S98–L99, and E132. K134 acts as the N6-AMP-lysine intermediate in catalysis. 4 residues coordinate NAD(+): R155, E192, K308, and K332. Residues C437, C439, C461, and C467 each coordinate Zn(2+). Positions K638–E716 constitute a BRCT domain.

This sequence belongs to the NAD-dependent DNA ligase family. LigA subfamily. It depends on Mg(2+) as a cofactor. The cofactor is Mn(2+).

The enzyme catalyses NAD(+) + (deoxyribonucleotide)n-3'-hydroxyl + 5'-phospho-(deoxyribonucleotide)m = (deoxyribonucleotide)n+m + AMP + beta-nicotinamide D-nucleotide.. Its function is as follows. DNA ligase that catalyzes the formation of phosphodiester linkages between 5'-phosphoryl and 3'-hydroxyl groups in double-stranded DNA using NAD as a coenzyme and as the energy source for the reaction. It is essential for DNA replication and repair of damaged DNA. This is DNA ligase from Bradyrhizobium sp. (strain ORS 278).